The primary structure comprises 429 residues: Histidine--tRNA ligase (429 aa).

The protein belongs to the class-II aminoacyl-tRNA synthetase family. As to quaternary structure, homodimer.

The protein resides in the cytoplasm. It catalyses the reaction tRNA(His) + L-histidine + ATP = L-histidyl-tRNA(His) + AMP + diphosphate + H(+). In Acidovorax ebreus (strain TPSY) (Diaphorobacter sp. (strain TPSY)), this protein is Histidine--tRNA ligase.